The following is a 243-amino-acid chain: Probable fructoselysine utilization operon transcriptional repressor (243 aa).

The HTH gntR-type domain occupies glutamine 10–glutamine 78. Residues glutamate 38–serine 57 constitute a DNA-binding region (H-T-H motif).

The protein operates within carbohydrate metabolism; fructoselysine degradation [regulation]. In terms of biological role, may regulate the transcription of the frlABCDR operon, involved in the utilization of fructoselysine and psicoselysine. This chain is Probable fructoselysine utilization operon transcriptional repressor (frlR), found in Escherichia coli O157:H7.